The chain runs to 470 residues: Serine/threonine-protein kinase-like protein At1g28390 (470 aa).

Positions 52-333 (FSANNFLGKG…LEVVECLKTV (282 aa)) constitute a Protein kinase domain. ATP-binding positions include 58-66 (LGKGSHGRV) and lysine 81. Residue aspartate 186 is the Proton acceptor of the active site. Residues threonine 221 and threonine 226 each carry the phosphothreonine modification. Tyrosine 234 carries the phosphotyrosine modification.

It belongs to the protein kinase superfamily. Ser/Thr protein kinase family.

The catalysed reaction is L-seryl-[protein] + ATP = O-phospho-L-seryl-[protein] + ADP + H(+). It carries out the reaction L-threonyl-[protein] + ATP = O-phospho-L-threonyl-[protein] + ADP + H(+). The sequence is that of Serine/threonine-protein kinase-like protein At1g28390 from Arabidopsis thaliana (Mouse-ear cress).